A 197-amino-acid polypeptide reads, in one-letter code: Large ribosomal subunit protein uL13C (197 aa).

The protein belongs to the universal ribosomal protein uL13 family. In terms of assembly, component of the large ribosomal subunit (LSU). Mature yeast ribosomes consist of a small (40S) and a large (60S) subunit. The 40S small subunit contains 1 molecule of ribosomal RNA (18S rRNA) and at least 33 different proteins. The large 60S subunit contains 3 rRNA molecules (25S, 5.8S and 5S rRNA) and at least 46 different proteins.

It localises to the cytoplasm. The protein localises to the nucleus. Its subcellular location is the nucleolus. Its function is as follows. Component of the ribosome, a large ribonucleoprotein complex responsible for the synthesis of proteins in the cell. The small ribosomal subunit (SSU) binds messenger RNAs (mRNAs) and translates the encoded message by selecting cognate aminoacyl-transfer RNA (tRNA) molecules. The large subunit (LSU) contains the ribosomal catalytic site termed the peptidyl transferase center (PTC), which catalyzes the formation of peptide bonds, thereby polymerizing the amino acids delivered by tRNAs into a polypeptide chain. The nascent polypeptides leave the ribosome through a tunnel in the LSU and interact with protein factors that function in enzymatic processing, targeting, and the membrane insertion of nascent chains at the exit of the ribosomal tunnel. In Schizosaccharomyces pombe (strain 972 / ATCC 24843) (Fission yeast), this protein is Large ribosomal subunit protein uL13C (rpl1603).